Here is a 351-residue protein sequence, read N- to C-terminus: DNA polymerase IV (351 aa).

The region spanning 4-185 is the UmuC domain; that stretch reads IIHIDMDCFF…LPLAKIPGVG (182 aa). The Mg(2+) site is built by aspartate 8 and aspartate 103. Glutamate 104 is a catalytic residue.

The protein belongs to the DNA polymerase type-Y family. In terms of assembly, monomer. The cofactor is Mg(2+).

It is found in the cytoplasm. It carries out the reaction DNA(n) + a 2'-deoxyribonucleoside 5'-triphosphate = DNA(n+1) + diphosphate. Its function is as follows. Poorly processive, error-prone DNA polymerase involved in untargeted mutagenesis. Copies undamaged DNA at stalled replication forks, which arise in vivo from mismatched or misaligned primer ends. These misaligned primers can be extended by PolIV. Exhibits no 3'-5' exonuclease (proofreading) activity. May be involved in translesional synthesis, in conjunction with the beta clamp from PolIII. The chain is DNA polymerase IV from Salmonella paratyphi A (strain ATCC 9150 / SARB42).